Here is a 407-residue protein sequence, read N- to C-terminus: S-adenosylmethionine synthase (407 aa).

Residue His-15 participates in ATP binding. Asp-17 lines the Mg(2+) pocket. Glu-43 contacts K(+). Glu-56 and Gln-100 together coordinate L-methionine. A flexible loop region spans residues 100–110; that stretch reads QSPDIAQGVDE. Residues 171–173, 248–249, Asp-257, 263–264, Ala-280, and Lys-284 each bind ATP; these read DGK, KF, and RK. Asp-257 contacts L-methionine. An L-methionine-binding site is contributed by Lys-288.

This sequence belongs to the AdoMet synthase family. Homotetramer; dimer of dimers. Requires Mg(2+) as cofactor. K(+) serves as cofactor.

Its subcellular location is the cytoplasm. The catalysed reaction is L-methionine + ATP + H2O = S-adenosyl-L-methionine + phosphate + diphosphate. It participates in amino-acid biosynthesis; S-adenosyl-L-methionine biosynthesis; S-adenosyl-L-methionine from L-methionine: step 1/1. In terms of biological role, catalyzes the formation of S-adenosylmethionine (AdoMet) from methionine and ATP. The overall synthetic reaction is composed of two sequential steps, AdoMet formation and the subsequent tripolyphosphate hydrolysis which occurs prior to release of AdoMet from the enzyme. This is S-adenosylmethionine synthase from Synechococcus sp. (strain RCC307).